Consider the following 258-residue polypeptide: Imidazole glycerol phosphate synthase subunit HisF (258 aa).

Catalysis depends on residues aspartate 11 and aspartate 130.

Belongs to the HisA/HisF family. Heterodimer of HisH and HisF.

The protein resides in the cytoplasm. It carries out the reaction 5-[(5-phospho-1-deoxy-D-ribulos-1-ylimino)methylamino]-1-(5-phospho-beta-D-ribosyl)imidazole-4-carboxamide + L-glutamine = D-erythro-1-(imidazol-4-yl)glycerol 3-phosphate + 5-amino-1-(5-phospho-beta-D-ribosyl)imidazole-4-carboxamide + L-glutamate + H(+). It functions in the pathway amino-acid biosynthesis; L-histidine biosynthesis; L-histidine from 5-phospho-alpha-D-ribose 1-diphosphate: step 5/9. In terms of biological role, IGPS catalyzes the conversion of PRFAR and glutamine to IGP, AICAR and glutamate. The HisF subunit catalyzes the cyclization activity that produces IGP and AICAR from PRFAR using the ammonia provided by the HisH subunit. The protein is Imidazole glycerol phosphate synthase subunit HisF of Escherichia coli (strain ATCC 8739 / DSM 1576 / NBRC 3972 / NCIMB 8545 / WDCM 00012 / Crooks).